A 473-amino-acid polypeptide reads, in one-letter code: 3-isopropylmalate dehydratase large subunit 2 (473 aa).

Positions 350, 410, and 413 each coordinate [4Fe-4S] cluster.

The protein belongs to the aconitase/IPM isomerase family. LeuC type 1 subfamily. In terms of assembly, heterodimer of LeuC and LeuD. [4Fe-4S] cluster serves as cofactor.

It carries out the reaction (2R,3S)-3-isopropylmalate = (2S)-2-isopropylmalate. The protein operates within amino-acid biosynthesis; L-leucine biosynthesis; L-leucine from 3-methyl-2-oxobutanoate: step 2/4. Its function is as follows. Catalyzes the isomerization between 2-isopropylmalate and 3-isopropylmalate, via the formation of 2-isopropylmaleate. In Salmonella choleraesuis (strain SC-B67), this protein is 3-isopropylmalate dehydratase large subunit 2.